Reading from the N-terminus, the 399-residue chain is MEKHLIALSVAALLAGAAPASADIKMGSLYPFSGPLALLGDESARGLEIAVEEINAKGGVQGEKIVLVRGDAVDNNQAIGEARRLISVENVAGIFGTFSSGRAVAASQVSELAGVPYFELGAVADEITDRGLENVYRANPYARDFAQMIVEMLQKKIAPKLGKDSKDLKIAVIYEDSSYGTSVAKHEETFLKEAGLNMVLSQSYPGNTVDMSSLVLDLKSAGADVVLQTSYQSDSVLFLQQANEGGYKPSAIVGAGGGYSLQPTADAVGHDVIEAAYDVDFTQFAVNTSFTPGLEEFVEAYKKKYGETPRSGHSLTNYVGAKVILEALNKVKGFDAAAVKQALSAVDIEAGKTAMGYGFKFDQNNQNERASMMGMQWQDGKLVTVYPDAAAISEIRLPQ.

Residues M1 to A22 form the signal peptide.

The protein belongs to the leucine-binding protein family.

In terms of biological role, component of an amino-acid transport system. The chain is Leu/Ile/Val-binding protein homolog 7 from Brucella suis biovar 1 (strain 1330).